The sequence spans 122 residues: Large ribosomal subunit protein uL14c (122 aa).

It belongs to the universal ribosomal protein uL14 family. As to quaternary structure, part of the 50S ribosomal subunit.

It is found in the plastid. It localises to the chloroplast. Binds to 23S rRNA. The chain is Large ribosomal subunit protein uL14c from Mesostigma viride (Green alga).